A 478-amino-acid chain; its full sequence is Glutamyl-tRNA(Gln) amidotransferase subunit A 2 (478 aa).

Residues Lys79 and Ser154 each act as charge relay system in the active site. Catalysis depends on Ser178, which acts as the Acyl-ester intermediate.

The protein belongs to the amidase family. GatA subfamily. Heterotrimer of A, B and C subunits.

The enzyme catalyses L-glutamyl-tRNA(Gln) + L-glutamine + ATP + H2O = L-glutaminyl-tRNA(Gln) + L-glutamate + ADP + phosphate + H(+). Allows the formation of correctly charged Gln-tRNA(Gln) through the transamidation of misacylated Glu-tRNA(Gln) in organisms which lack glutaminyl-tRNA synthetase. The reaction takes place in the presence of glutamine and ATP through an activated gamma-phospho-Glu-tRNA(Gln). This is Glutamyl-tRNA(Gln) amidotransferase subunit A 2 (gatA2) from Clostridium acetobutylicum (strain ATCC 824 / DSM 792 / JCM 1419 / IAM 19013 / LMG 5710 / NBRC 13948 / NRRL B-527 / VKM B-1787 / 2291 / W).